The sequence spans 140 residues: Vesicle transport protein GOT1 (140 aa).

The next 4 helical transmembrane spans lie at 12–32, 35–55, 71–91, and 96–116; these read IGLG…IFVF, GLIA…IGIN, ISFG…GLLL, and FLVL…RIPL.

The protein belongs to the GOT1 family. In terms of assembly, homodimer. No interactions with STL1, STL2, CESA1, CESA3, CESA4, CESA6, CESA7 or CESA8.

Its subcellular location is the golgi apparatus membrane. Functionally, may be involved in fusion of ER-derived transport vesicles with the Golgi complex. The chain is Vesicle transport protein GOT1 from Arabidopsis thaliana (Mouse-ear cress).